We begin with the raw amino-acid sequence, 327 residues long: DNA-directed RNA polymerase subunit alpha (327 aa).

The alpha N-terminal domain (alpha-NTD) stretch occupies residues methionine 1–glutamate 233. An alpha C-terminal domain (alpha-CTD) region spans residues glutamate 266 to lysine 327.

It belongs to the RNA polymerase alpha chain family. In terms of assembly, in plastids the minimal PEP RNA polymerase catalytic core is composed of four subunits: alpha, beta, beta', and beta''. When a (nuclear-encoded) sigma factor is associated with the core the holoenzyme is formed, which can initiate transcription.

Its subcellular location is the plastid. The protein resides in the chloroplast. It catalyses the reaction RNA(n) + a ribonucleoside 5'-triphosphate = RNA(n+1) + diphosphate. DNA-dependent RNA polymerase catalyzes the transcription of DNA into RNA using the four ribonucleoside triphosphates as substrates. This is DNA-directed RNA polymerase subunit alpha from Barbarea verna (Land cress).